A 159-amino-acid polypeptide reads, in one-letter code: Ribosomal RNA large subunit methyltransferase H (159 aa).

S-adenosyl-L-methionine contacts are provided by residues Leu-76, Gly-108, and 127–132 (FGRLTL).

It belongs to the RNA methyltransferase RlmH family. As to quaternary structure, homodimer.

It localises to the cytoplasm. It catalyses the reaction pseudouridine(1915) in 23S rRNA + S-adenosyl-L-methionine = N(3)-methylpseudouridine(1915) in 23S rRNA + S-adenosyl-L-homocysteine + H(+). Specifically methylates the pseudouridine at position 1915 (m3Psi1915) in 23S rRNA. This chain is Ribosomal RNA large subunit methyltransferase H, found in Listeria monocytogenes serovar 1/2a (strain ATCC BAA-679 / EGD-e).